The primary structure comprises 122 residues: Small ribosomal subunit protein bS6 (122 aa).

The protein belongs to the bacterial ribosomal protein bS6 family.

Binds together with bS18 to 16S ribosomal RNA. The polypeptide is Small ribosomal subunit protein bS6 (rpsF) (Neisseria meningitidis serogroup B (strain ATCC BAA-335 / MC58)).